A 363-amino-acid chain; its full sequence is Somatostatin receptor type 5 (363 aa).

Residues 1-35 are Extracellular-facing; sequence MEPLSLASTPSWNASAASSGNHNWSLVGSASPMGA. N13 and N23 each carry an N-linked (GlcNAc...) asparagine glycan. The helical transmembrane segment at 36–63 threads the bilayer; the sequence is RAVLVPVLYLLVCTVGLSGNTLVIYVVL. Residues 64 to 73 lie on the Cytoplasmic side of the membrane; sequence RHAKMKTVTN. The helical transmembrane segment at 74–99 threads the bilayer; it reads VYILNLAVADVLFMLGLPFLATQNAV. Over 100-111 the chain is Extracellular; that stretch reads VSYWPFGSFLCR. A disulfide bridge links C110 with C185. Residues 112–133 traverse the membrane as a helical segment; the sequence is LVMTLDGINQFTSIFCLMVMSV. The Cytoplasmic segment spans residues 134–155; it reads DRYLAVVHPLRSARWRRPRVAK. Residues 156-176 form a helical membrane-spanning segment; that stretch reads MASAAVWVFSLLMSLPLLVFA. Residues 177-196 are Extracellular-facing; that stretch reads DVQEGWGTCNLSWPEPVGLW. An N-linked (GlcNAc...) asparagine glycan is attached at N186. The chain crosses the membrane as a helical span at residues 197–221; sequence GAAFITYTSVLGFFGPLLVICLCYL. Residues 222 to 247 lie on the Cytoplasmic side of the membrane; sequence LIVVKVKAAGMRVGSSRRRRSEPKVT. The helical transmembrane segment at 248–273 threads the bilayer; sequence RMVVVVVLVFVGCWLPFFIVNIVNLA. At 274–283 the chain is on the extracellular side; sequence FTLPEEPTSA. Residues 284–308 traverse the membrane as a helical segment; it reads GLYFFVVVLSYANSCANPLLYGFLS. Over 309 to 363 the chain is Cytoplasmic; that stretch reads DNFRQSFRKVLCLRRGYGMEDADAIEPRPDKSGRPQATLPTRSCEANGLMQTSRI. C320 carries S-palmitoyl cysteine; by ZDHHC5 lipidation. A disordered region spans residues 331–363; sequence DAIEPRPDKSGRPQATLPTRSCEANGLMQTSRI.

This sequence belongs to the G-protein coupled receptor 1 family. As to quaternary structure, heterodimer with SSTR2. Heterodimerization with SSTR2 increases cell growth inhibition activity of SSTR2. In terms of processing, palmitoylated at Cys-320 by ZDHHC5, but not ZDHHC8. Palmitoylation creates an additional intracellular loop which is thought to be important for efficient coupling to G-proteins and may target the protein to lipid rafts. As to expression, prominent in the pituitary and small intestine. Low levels in islets and spleen. Not detected in kidney, pancreas, cerebellum, or cortex.

It localises to the cell membrane. Functionally, receptor for somatostatin-28. The activity of this receptor is mediated by G proteins which inhibit adenylyl cyclase. Increases cell growth inhibition activity of SSTR2 following heterodimerization. This Rattus norvegicus (Rat) protein is Somatostatin receptor type 5 (Sstr5).